A 376-amino-acid polypeptide reads, in one-letter code: tRNA-specific 2-thiouridylase MnmA (376 aa).

Residues 14–21 (GMSGGVDS) and methionine 40 contribute to the ATP site. Residues 100 to 102 (NPD) are interaction with target base in tRNA. The active-site Nucleophile is the cysteine 105. Cysteine 105 and cysteine 202 are joined by a disulfide. Residue glycine 129 participates in ATP binding. An interaction with tRNA region spans residues 152-154 (KDQ). The active-site Cysteine persulfide intermediate is cysteine 202. Positions 315 to 316 (RY) are interaction with tRNA.

This sequence belongs to the MnmA/TRMU family.

It is found in the cytoplasm. The enzyme catalyses S-sulfanyl-L-cysteinyl-[protein] + uridine(34) in tRNA + AH2 + ATP = 2-thiouridine(34) in tRNA + L-cysteinyl-[protein] + A + AMP + diphosphate + H(+). Its function is as follows. Catalyzes the 2-thiolation of uridine at the wobble position (U34) of tRNA, leading to the formation of s(2)U34. This chain is tRNA-specific 2-thiouridylase MnmA, found in Lactococcus lactis subsp. cremoris (strain MG1363).